A 556-amino-acid chain; its full sequence is Arginine--tRNA ligase (556 aa).

The 'HIGH' region motif lies at 132–142 (ANPTGDLHLGH).

It belongs to the class-I aminoacyl-tRNA synthetase family. In terms of assembly, monomer.

It is found in the cytoplasm. The enzyme catalyses tRNA(Arg) + L-arginine + ATP = L-arginyl-tRNA(Arg) + AMP + diphosphate. The polypeptide is Arginine--tRNA ligase (Listeria monocytogenes serovar 1/2a (strain ATCC BAA-679 / EGD-e)).